The chain runs to 434 residues: Calcium uptake protein 2, mitochondrial (434 aa).

Residues 1–22 (MAAAAGSCARVAAWGGKLRRGL) constitute a mitochondrion transit peptide. In terms of domain architecture, EF-hand 1 spans 172-207 (KPHSGFHVAFKMLDTDGNEMIEKREFFKLQKIISKQ). Ca(2+)-binding residues include Asp185, Asp187, Asn189, Met191, Glu193, and Glu196. Ser205 bears the Phosphoserine mark. Residues 227–262 (EPEINTTLQMRFFGKRGQRKLHYKEFRRFMENLQTE) form the EF-hand 2; degenerate domain. An EF-hand 3; degenerate domain is found at 293 to 328 (TENKDIYWKNVREKLSAGESISLDEFKSFCHFTTHL). Residues 362–397 (LSNNILDTVFKIFDLDGDECLSHEEFLGVLKNRMHR) enclose the EF-hand 4 domain. The Ca(2+) site is built by Asp375, Asp377, Asp379, Cys381, and Glu386.

This sequence belongs to the MICU1 family. MICU2 subfamily. In terms of assembly, heterodimer; disulfide-linked; heterodimerizes with MICU1. Component of the uniplex complex, composed of MCU, EMRE/SMDT1, MICU1 and MICU2 in a 4:4:1:1 stoichiometry.

It is found in the mitochondrion intermembrane space. It localises to the mitochondrion inner membrane. Functionally, calcium sensor of the mitochondrial calcium uniporter (MCU) channel, which senses calcium level via its EF-hand domains. MICU1 and MICU2 form a disulfide-linked heterodimer that stimulates and inhibits MCU activity, depending on the concentration of calcium. At low calcium levels, MICU1 occludes the pore of the MCU channel, preventing mitochondrial calcium uptake. At higher calcium levels, calcium-binding to MICU1 and MICU2 induces a conformational change that weakens MCU-MICU1 interactions and moves the MICU1-MICU2 heterodimer away from the pore, allowing calcium permeation through the MCU channel. The sequence is that of Calcium uptake protein 2, mitochondrial from Homo sapiens (Human).